Consider the following 736-residue polypeptide: Segment polarity protein dishevelled homolog DVL-2 (736 aa).

The 83-residue stretch at 11-93 (VGETKVIYHL…RVVSWLVSSD (83 aa)) folds into the DIX domain. A disordered region spans residues 93–255 (DTPQPEVAPP…RMERTSSFSS (163 aa)). Residues 111–122 (VPPPPPLPPLPP) show a composition bias toward pro residues. Basic and acidic residues predominate over residues 159-171 (LRRDRPRRRDSSE). The span at 193-208 (ESSSTLMTSELESTSL) shows a compositional bias: low complexity. Ser-211 carries the post-translational modification Phosphoserine. The segment covering 218–230 (SRFSSSTEQSSAS) has biased composition (polar residues). A compositionally biased stretch (basic residues) spans 232-244 (LLKRHRRRRKQRP). The PDZ domain maps to 267-339 (TVTLNMEKYN…NDDAVRVLRD (73 aa)). Residues 433–507 (PESGLEVRDR…SEQCYYVFGD (75 aa)) form the DEP domain. The span at 558-568 (PHPYSPQPPPY) shows a compositional bias: pro residues. A disordered region spans residues 558 to 665 (PHPYSPQPPP…PNLRALPGLH (108 aa)). Low complexity-rich tracts occupy residues 581 to 598 (ASSQHSEGSRSSGSTRSD) and 614 to 629 (SKSGSGSESELSSRGG).

This sequence belongs to the DSH family. Interacts through its PDZ domain with the C-terminal regions of VANGL1 and VANGL2. Interacts with Rac. Interacts with ARRB1; the interaction is enhanced by phosphorylation of DVL1. Can form large oligomers (via DIX domain). Interacts (via DIX domain) with DIXDC1 (via DIX domain). Interacts (via DEP domain) with AP2M1 and the AP-2 complex. Interacts with FAM105B/otulin. Interacts with DCDC2. Interacts (when phosphorylated) with FOXK1 and FOXK2; the interaction induces DVL2 nuclear translocation. Interacts with MAPK15. Interacts with PKD1 (via extracellular domain). Interacts with LMBR1L. Post-translationally, phosphorylated by CSNK1D. WNT3A induces DVL2 phosphorylation by CSNK1E and MARK kinases. Ubiquitinated via 'Lys-63'-linked polyubiquitin chains; leading to its autophagy-mediated degradation. As to expression, ubiquitous.

The protein localises to the cell membrane. It is found in the cytoplasm. The protein resides in the cytosol. Its subcellular location is the cytoplasmic vesicle. It localises to the nucleus. Its function is as follows. Plays a role in the signal transduction pathways mediated by multiple Wnt genes. Participates both in canonical and non-canonical Wnt signaling by binding to the cytoplasmic C-terminus of frizzled family members and transducing the Wnt signal to down-stream effectors. Promotes internalization and degradation of frizzled proteins upon Wnt signaling. This is Segment polarity protein dishevelled homolog DVL-2 (Dvl2) from Mus musculus (Mouse).